The sequence spans 105 residues: Spermatogenesis-associated protein 8 (105 aa).

In terms of tissue distribution, expressed at high levels in adult testis, at moderate levels in sperm and at low levels in fetal testis. Not detected in other tissues.

The chain is Spermatogenesis-associated protein 8 (SPATA8) from Homo sapiens (Human).